The following is a 398-amino-acid chain: S-adenosylmethionine decarboxylase proenzyme (398 aa).

Catalysis depends on residues Glu18 and Glu21. The Schiff-base intermediate with substrate; via pyruvic acid role is filled by Ser78. Ser78 is modified (pyruvic acid (Ser); by autocatalysis). Catalysis depends on Cys92, which acts as the Proton donor; for catalytic activity. Active-site proton acceptor; for processing activity residues include Ser243 and His256.

It belongs to the eukaryotic AdoMetDC family. Pyruvate is required as a cofactor. Is synthesized initially as an inactive proenzyme. Formation of the active enzyme involves a self-maturation process in which the active site pyruvoyl group is generated from an internal serine residue via an autocatalytic post-translational modification. Two non-identical subunits are generated from the proenzyme in this reaction, and the pyruvate is formed at the N-terminus of the alpha chain, which is derived from the carboxyl end of the proenzyme. The post-translation cleavage follows an unusual pathway, termed non-hydrolytic serinolysis, in which the side chain hydroxyl group of the serine supplies its oxygen atom to form the C-terminus of the beta chain, while the remainder of the serine residue undergoes an oxidative deamination to produce ammonia and the pyruvoyl group blocking the N-terminus of the alpha chain.

The catalysed reaction is S-adenosyl-L-methionine + H(+) = S-adenosyl 3-(methylsulfanyl)propylamine + CO2. Its pathway is amine and polyamine biosynthesis; S-adenosylmethioninamine biosynthesis; S-adenosylmethioninamine from S-adenosyl-L-methionine: step 1/1. The polypeptide is S-adenosylmethionine decarboxylase proenzyme (SAMDC) (Oryza sativa subsp. japonica (Rice)).